Reading from the N-terminus, the 421-residue chain is Putative NBPF family member NBPF7 (421 aa).

Residues 87-143 are a coiled coil; sequence IKSMLREELQFKEEKLAEQLKQAEELRQYKVLVHSQERELIQLREKLREGRDASHSL. Disordered regions lie at residues 179–251, 312–334, and 402–421; these read VHKL…KITS, EKEV…HDVS, and YNSK…FTED. 2 consecutive Olduvai domains span residues 190–279 and 280–391; these read EDEN…NILL and ENQN…RMSQ. Residues 194-217 are compositionally biased toward basic and acidic residues; the sequence is DKTKELDKVQESPAPREEQKAEEK. Polar residues predominate over residues 230 to 243; sequence TYSNSHGPSDSNPP. Basic and acidic residues predominate over residues 312–333; the sequence is EKEVLQDSPEERVTTSCSDHDV. Polar residues predominate over residues 403–421; sequence NSKPSSIPNTTLQGSFTED.

Belongs to the NBPF family.

Its subcellular location is the cytoplasm. The sequence is that of Putative NBPF family member NBPF7 from Homo sapiens (Human).